We begin with the raw amino-acid sequence, 146 residues long: Large ribosomal subunit protein uL15 (146 aa).

A compositionally biased stretch (basic and acidic residues) spans 1-13; that stretch reads MKLNELKPNEGSR. Residues 1 to 54 form a disordered region; it reads MKLNELKPNEGSRRNRKRVGRGTSSGYGKTAGRGQKGQLARTGGKTRLGFEGGQ. Gly residues predominate over residues 23–35; it reads TSSGYGKTAGRGQ.

This sequence belongs to the universal ribosomal protein uL15 family. As to quaternary structure, part of the 50S ribosomal subunit.

Binds to the 23S rRNA. The protein is Large ribosomal subunit protein uL15 of Lactobacillus johnsonii (strain CNCM I-12250 / La1 / NCC 533).